A 288-amino-acid chain; its full sequence is Elongation factor Ts (288 aa).

Residues 80–83 are involved in Mg(2+) ion dislocation from EF-Tu; the sequence is TDFL.

It belongs to the EF-Ts family.

Its subcellular location is the cytoplasm. In terms of biological role, associates with the EF-Tu.GDP complex and induces the exchange of GDP to GTP. It remains bound to the aminoacyl-tRNA.EF-Tu.GTP complex up to the GTP hydrolysis stage on the ribosome. The protein is Elongation factor Ts of Pseudomonas fluorescens (strain ATCC BAA-477 / NRRL B-23932 / Pf-5).